A 450-amino-acid chain; its full sequence is MTIVTEIGKILKTSKHLSELESEMMSLMSEVFTDSLAQCLERLDKELISDYLVQGWEIDRIESRQVTFLFGEVSFKRHRLRKEGEKSFLPLDKALGLEARQRYSPSFMEKVSLLATGMTFRQASASLELLTGRTMSHQTIQGITQRVAEAIGKSEVPPSEELRKPKVLYIEGDGVWIGSQSKGKHHEFKRGFIHEGVDRTGKRGQLINPVYFGCFGTSRDLFQEIGDYLQTHYDLRETIIIANSDGGSGYEASKFEEILGRYGSFNYCLDSYHVMRYITGKLGFDKGLQKSIRQAVKDYNKSELELLLDTAESCLEDDKQLEKLLAVKSYLLSHWEAIKPLKLRDLGVTDGVGVCESGHRFYTNRLKRQGRNWTKSGAESMVILMTAQRNGLFEVYYRNSYPFRTFSSEIKINMRKLLQKGQHDQHVIPSATIPLNGATSSPIGQMKKWI.

Belongs to the UPF0236 family.

The sequence is that of UPF0236 protein in vanSb 3'region from Streptococcus gallolyticus (Streptococcus bovis biotype I).